Consider the following 384-residue polypeptide: Shufflon-specific DNA recombinase (384 aa).

One can recognise a Core-binding (CB) domain in the interval 9 to 96 (MSLSRALDKY…LLSSLFNIAR (88 aa)). A Tyr recombinase domain is found at 118-284 (GRDRRLTSSE…RAWQLVSKLD (167 aa)). Active-site residues include Arg-155, Lys-180, His-235, Arg-238, and His-262. Tyr-271 (O-(3'-phospho-DNA)-tyrosine intermediate) is an active-site residue.

It belongs to the 'phage' integrase family.

Its function is as follows. Shufflon-specific DNA recombinase. This Escherichia coli protein is Shufflon-specific DNA recombinase (rci).